A 413-amino-acid polypeptide reads, in one-letter code: Aspartate aminotransferase, cytoplasmic (413 aa).

Residues glycine 39, tryptophan 141, and asparagine 195 each contribute to the L-aspartate site. Position 259 is an N6-(pyridoxal phosphate)lysine (lysine 259). Position 387 (arginine 387) interacts with L-aspartate.

It belongs to the class-I pyridoxal-phosphate-dependent aminotransferase family. As to quaternary structure, homodimer. Pyridoxal 5'-phosphate serves as cofactor.

The protein localises to the cytoplasm. It carries out the reaction L-aspartate + 2-oxoglutarate = oxaloacetate + L-glutamate. It catalyses the reaction L-cysteine + 2-oxoglutarate = 2-oxo-3-sulfanylpropanoate + L-glutamate. The enzyme catalyses (2S)-2-aminobutanoate + 2-oxoglutarate = 2-oxobutanoate + L-glutamate. The catalysed reaction is 3-sulfino-L-alanine + 2-oxoglutarate = 3-sulfinopyruvate + L-glutamate. Functionally, biosynthesis of L-glutamate from L-aspartate or L-cysteine. Important regulator of levels of glutamate, the major excitatory neurotransmitter of the vertebrate central nervous system. Acts as a scavenger of glutamate in brain neuroprotection. The aspartate aminotransferase activity is involved in hepatic glucose synthesis during development and in adipocyte glyceroneogenesis. Using L-cysteine as substrate, regulates levels of mercaptopyruvate, an important source of hydrogen sulfide. Mercaptopyruvate is converted into H(2)S via the action of 3-mercaptopyruvate sulfurtransferase (3MST). Hydrogen sulfide is an important synaptic modulator and neuroprotectant in the brain. In Bos taurus (Bovine), this protein is Aspartate aminotransferase, cytoplasmic.